A 308-amino-acid chain; its full sequence is 1D-myo-inositol 2-acetamido-2-deoxy-alpha-D-glucopyranoside deacetylase (308 aa).

Zn(2+) is bound by residues His37, Asp40, and His171.

It belongs to the MshB deacetylase family. The cofactor is Zn(2+).

It carries out the reaction 1D-myo-inositol 2-acetamido-2-deoxy-alpha-D-glucopyranoside + H2O = 1D-myo-inositol 2-amino-2-deoxy-alpha-D-glucopyranoside + acetate. Its function is as follows. Catalyzes the deacetylation of 1D-myo-inositol 2-acetamido-2-deoxy-alpha-D-glucopyranoside (GlcNAc-Ins) in the mycothiol biosynthesis pathway. The chain is 1D-myo-inositol 2-acetamido-2-deoxy-alpha-D-glucopyranoside deacetylase from Mycobacterium sp. (strain KMS).